The following is a 349-amino-acid chain: Probable inactive tRNA-specific adenosine deaminase-like protein 3 (349 aa).

N-acetylmethionine is present on Met1. Residues 1–25 form a disordered region; the sequence is MEPTSGFAEQPGPEKVESEEQEPAQ. One can recognise a CMP/dCMP-type deaminase domain in the interval 171 to 334; it reads AAMQTHMERA…PDLNHRFQVF (164 aa). Positions 223, 289, and 292 each coordinate Zn(2+).

The protein belongs to the cytidine and deoxycytidylate deaminase family. ADAT3 subfamily. Zn(2+) is required as a cofactor.

The chain is Probable inactive tRNA-specific adenosine deaminase-like protein 3 (Adat3) from Rattus norvegicus (Rat).